Reading from the N-terminus, the 587-residue chain is Kelch-like protein 3 (587 aa).

A Phosphoserine modification is found at serine 10. Residues 50 to 117 enclose the BTB domain; that stretch reads CDVMIVAEDV…VYTAEIEVTE (68 aa). The region spanning 152–254 is the BACK domain; it reads CLGIRAFADV…PRDYLVQTVE (103 aa). A Phosphothreonine modification is found at threonine 295. Kelch repeat units follow at residues 302 to 347, 348 to 394, 396 to 441, 442 to 490, 491 to 537, and 539 to 585; these read VMIV…FMAG, HVYA…VLND, LYAV…VVEG, KLYA…VLSG, QLYA…AVNG, and LYVV…VIHK. Threonine 375 is subject to Phosphothreonine. A phosphoserine mark is found at serine 376 and serine 433.

This sequence belongs to the KLHL3 family. In terms of assembly, homodimer. Component of the BCR(KLHL3) E3 ubiquitin ligase complex, at least composed of CUL3 and KLHL3 and RBX1. Interacts with CLDN8. Post-translationally, phosphorylation at Ser-433 by PKA or PKC decreases the interaction with WNK1 and WNK4, leading to inhibit their degradation by the BCR(KLHL3) complex. Phosphorylated at Ser-433 by PKC in response to angiotensin II signaling, decreasing ability to promote degradation of WNK1 and WNK4, leading to activation of Na-Cl cotransporter SLC12A3/NCC. Phosphorylation at Ser-433 is increased by insulin. Dephosphorylated at Ser-433 by calcineurin PPP3CA, promoting degradation of WNK1 and WNK4.

Its subcellular location is the cytoplasm. The protein localises to the cytoskeleton. It is found in the cytosol. Its pathway is protein modification; protein ubiquitination. Its function is as follows. Substrate-specific adapter of a BCR (BTB-CUL3-RBX1) E3 ubiquitin ligase complex that acts as a regulator of ion transport in the distal nephron. The BCR(KLHL3) complex acts by mediating ubiquitination and degradation of WNK1 and WNK4, two activators of Na-Cl cotransporter SLC12A3/NCC in distal convoluted tubule cells of kidney, thereby regulating NaCl reabsorption. The BCR(KLHL3) complex also mediates ubiquitination and degradation of WNK3. The BCR(KLHL3) complex also mediates ubiquitination of CLDN8, a tight-junction protein required for paracellular chloride transport in the kidney, leading to its degradation. The protein is Kelch-like protein 3 (KLHL3) of Pongo abelii (Sumatran orangutan).